Reading from the N-terminus, the 842-residue chain is Non-motile and phage-resistance protein (842 aa).

Helical transmembrane passes span 29–50 (VFVR…AFGV), 283–303 (GAFS…LLMI), and 343–363 (VYLS…VVSG). The PAS domain maps to 318-389 (SERRFRLAVE…QALANAAMYG (72 aa)). Positions 607-830 (NMSHELRTPL…TVSFTLPVRH (224 aa)) constitute a Histidine kinase domain. At histidine 610 the chain carries Phosphohistidine; by autocatalysis.

The protein resides in the cell membrane. It carries out the reaction ATP + protein L-histidine = ADP + protein N-phospho-L-histidine.. Functionally, member of the two-component regulatory system involved in the regulation of polar organelle development. PleC functions as a membrane-associated protein kinase that transfers phosphate to the response regulator PleD, leading to its activation. This is Non-motile and phage-resistance protein (pleC) from Caulobacter vibrioides (strain ATCC 19089 / CIP 103742 / CB 15) (Caulobacter crescentus).